The primary structure comprises 281 residues: Arylamine N-acetyltransferase / N-hydroxyarylamine O-acetyltransferase (281 aa).

The active-site Acyl-thioester intermediate is Cys-69. Active-site residues include His-107 and Asp-122.

Belongs to the arylamine N-acetyltransferase family. As to quaternary structure, monomer and homodimer.

Its subcellular location is the cytoplasm. The catalysed reaction is an arylamine + acetyl-CoA = an N-acetylarylamine + CoA. It catalyses the reaction an N-hydroxyarylamine + acetyl-CoA = an N-acetoxyarylamine + CoA. With respect to regulation, inhibited by N-ethylmaleimide and iodoacetamide. Its function is as follows. Catalyzes both the acetyl-CoA-dependent N-acetylation of aromatic amines and the O-acetylation of N-hydroxyarylamines. In vitro, catalyzes the O-acetylation of N-hydroxy-Glu-P-1, and the N-acetylation of isoniazid and 2-aminofluorene. In Salmonella typhimurium (strain LT2 / SGSC1412 / ATCC 700720), this protein is Arylamine N-acetyltransferase / N-hydroxyarylamine O-acetyltransferase (nhoA).